The primary structure comprises 287 residues: Small ribosomal subunit protein uS2 (287 aa).

The disordered stretch occupies residues 235–287; sequence ESGFATGGGDWEATAPAAASGWDDAAAQPQNWDSAAQGAASWDEAAAPKEGQW. Residues 247-261 show a composition bias toward low complexity; it reads ATAPAAASGWDDAAA.

It belongs to the universal ribosomal protein uS2 family. Component of the small ribosomal subunit. Mature ribosomes consist of a small (40S) and a large (60S) subunit. The 40S subunit contains about 33 different proteins and 1 molecule of RNA (18S). The 60S subunit contains about 49 different proteins and 3 molecules of RNA (25S, 5.8S and 5S). Interacts with RPS21.

It is found in the cytoplasm. Required for the assembly and/or stability of the 40S ribosomal subunit. Required for the processing of the 20S rRNA-precursor to mature 18S rRNA in a late step of the maturation of 40S ribosomal subunits. The chain is Small ribosomal subunit protein uS2 from Pyricularia oryzae (strain 70-15 / ATCC MYA-4617 / FGSC 8958) (Rice blast fungus).